Consider the following 180-residue polypeptide: MDNSLHATTIYAVRHNGEAAMAGDGQVTLGQQVIMKQTARKVRRLYEGKVLAGFAGSVADAFTLFEKFETKLQQFSGNLERAAVELAQEWRGDKQLRQLEAMLIVMNKDAILIVSGTGEVIAPDDDLIAIGSGGNYALSAGRALKRHAAQLSASEMAYESLKVAADICVFTNDNIIVETL.

Threonine 8 is an active-site residue. Na(+)-binding residues include alanine 165, cysteine 168, and threonine 171.

It belongs to the peptidase T1B family. HslV subfamily. As to quaternary structure, a double ring-shaped homohexamer of HslV is capped on each side by a ring-shaped HslU homohexamer. The assembly of the HslU/HslV complex is dependent on binding of ATP.

The protein resides in the cytoplasm. The catalysed reaction is ATP-dependent cleavage of peptide bonds with broad specificity.. With respect to regulation, allosterically activated by HslU binding. In terms of biological role, protease subunit of a proteasome-like degradation complex believed to be a general protein degrading machinery. The sequence is that of ATP-dependent protease subunit HslV from Staphylococcus epidermidis (strain ATCC 12228 / FDA PCI 1200).